The following is a 311-amino-acid chain: MSKILVFGHQNPDSDAIGSSVAFAYLAKEAWGLDTEAVALGTPNEETAYVLDYFGVQAPRVVESAKAEGVETVILTDHNEFQQSISDIKDVTVYGVVDHHRVANFETANPLYMRLEPVGSASSIVYRMFKENGVSVPKELAGLLLSGLISDTLLLKSPTTHASDIPVAKELAEIAGVNLEEYGLEMLKAGTNLSSKTAAELIDIDAKTFELNGEAVRVAQVNTVDINDILARQEEIEVAIQEAIVTEGYSDFVLMITDIVNSNSEILALGSNMAKVEAAFEFTLENNHAFLAGAVSRKKQVVPQLTESYNA.

Mn(2+) is bound by residues His-9, Asp-13, Asp-15, Asp-77, His-99, and Asp-151.

Belongs to the PPase class C family. Requires Mn(2+) as cofactor.

The protein resides in the cytoplasm. The catalysed reaction is diphosphate + H2O = 2 phosphate + H(+). The polypeptide is Probable manganese-dependent inorganic pyrophosphatase (Streptococcus agalactiae serotype III (strain NEM316)).